The primary structure comprises 260 residues: (+)-borneol dehydrogenase 1 (260 aa).

NAD(+)-binding positions include 20 to 26 (GGASGIG), Asp44, 67 to 68 (DV), and 94 to 96 (NAG). Residue Ser148 is the Proton donor of the active site. Tyr161, Lys165, and Thr196 together coordinate NAD(+). Tyr161 functions as the Proton acceptor in the catalytic mechanism. Residue Lys165 is the Proton donor/acceptor of the active site.

Belongs to the short-chain dehydrogenases/reductases (SDR) family.

It carries out the reaction (1R,2S,4R)-borneol + NAD(+) = (1R,4R)-camphor + NADH + H(+). In terms of biological role, involved in the biosynthesis of monoterpene natural products related to camphor. Catalayzes the oxidation of (+)-borneol to (+)-camphor. Shows absolute selectivity towards (+)-borneol. Catalyzes the oxidation of (+)-isoborneol to (-)-camphor. Shows absolute selectivity towards (+)-isoborneol. The polypeptide is (+)-borneol dehydrogenase 1 (Salvia officinalis (Sage)).